A 151-amino-acid polypeptide reads, in one-letter code: Protein E6 (151 aa).

2 zinc fingers span residues 30 to 66 and 103 to 139; these read CVYCKKELCRADVYNVAFTEIKIVYRDNNPYAVCKQC and CHRCQRPLGPEEKQKLVDEKKRFHEIAGRWTGQCANC. A PDZ-binding domain motif is present at residues 149–151; it reads TQV.

Belongs to the papillomaviridae E6 protein family. Forms homodimers. Interacts with ubiquitin-protein ligase UBE3A/E6-AP and thus forms a complex with human TP53. Interacts with human NFX1 and MAGI3. Interacts with human IRF3; this interaction inhibits the establishment of antiviral state. Interacts with human TYK2; this interaction inhibits JAK-STAT activation by interferon alpha. Interacts with host DLG1; this interaction leads to the proteasomal degradation of DLG1.

The protein localises to the host cytoplasm. It is found in the host nucleus. In terms of biological role, plays a major role in the induction and maintenance of cellular transformation. Acts mainly as an oncoprotein by stimulating the destruction of many host cell key regulatory proteins. E6 associates with host UBE3A/E6-AP ubiquitin-protein ligase, and inactivates tumor suppressors TP53 and TP73 by targeting them to the 26S proteasome for degradation. In turn, DNA damage and chromosomal instabilities increase and lead to cell proliferation and cancer development. The complex E6/E6AP targets several other substrates to degradation via the proteasome including host DLG1 or NFX1, a repressor of human telomerase reverse transcriptase (hTERT). The resulting increased expression of hTERT prevents the shortening of telomere length leading to cell immortalization. Other cellular targets including BAK1, Fas-associated death domain-containing protein (FADD) and procaspase 8, are degraded by E6/E6AP causing inhibition of apoptosis. E6 also inhibits immune response by interacting with host IRF3 and TYK2. These interactions prevent IRF3 transcriptional activities and inhibit TYK2-mediated JAK-STAT activation by interferon alpha resulting in inhibition of the interferon signaling pathway. This chain is Protein E6, found in Human papillomavirus 51.